Here is an 834-residue protein sequence, read N- to C-terminus: DIS3-like exonuclease 2 (834 aa).

Positions 1-23 are enriched in polar residues; that stretch reads MHNSEFLSPVQSGTQRGTNRSIL. Residues 1–35 form a disordered region; sequence MHNSEFLSPVQSGTQRGTNRSILNNKKSGKGKKKS. The Mg(2+) site is built by Asp-354 and Asp-363.

The protein belongs to the RNR ribonuclease family. DIS3L2 subfamily. Mg(2+) serves as cofactor. Mn(2+) is required as a cofactor.

The protein resides in the cytoplasm. Its subcellular location is the P-body. Its function is as follows. 3'-5'-exoribonuclease that specifically recognizes RNAs polyuridylated at their 3' end and mediates their degradation. Component of an exosome-independent RNA degradation pathway that mediates degradation of both mRNAs and miRNAs that have been polyuridylated by a terminal uridylyltransferase. Essential for correct mitosis, and negatively regulates cell proliferation. This is DIS3-like exonuclease 2 from Xenopus tropicalis (Western clawed frog).